Reading from the N-terminus, the 502-residue chain is Probable cytosol aminopeptidase (502 aa).

The Mn(2+) site is built by Lys-269 and Asp-274. Lys-281 is an active-site residue. Mn(2+) is bound by residues Asp-292, Asp-351, and Glu-353. Arg-355 is an active-site residue.

This sequence belongs to the peptidase M17 family. The cofactor is Mn(2+).

The protein resides in the cytoplasm. It carries out the reaction Release of an N-terminal amino acid, Xaa-|-Yaa-, in which Xaa is preferably Leu, but may be other amino acids including Pro although not Arg or Lys, and Yaa may be Pro. Amino acid amides and methyl esters are also readily hydrolyzed, but rates on arylamides are exceedingly low.. The catalysed reaction is Release of an N-terminal amino acid, preferentially leucine, but not glutamic or aspartic acids.. In terms of biological role, presumably involved in the processing and regular turnover of intracellular proteins. Catalyzes the removal of unsubstituted N-terminal amino acids from various peptides. In Photobacterium profundum (strain SS9), this protein is Probable cytosol aminopeptidase.